We begin with the raw amino-acid sequence, 418 residues long: MPSSVSWGILLLAGLCCLVPVSLAEDPQGDAAQKTDTSHHDQDHPTFNKITPNLAEFAFSLYRQLAHQSNSTNIFFSPVSIATAFAMLSLGTKADTHSEILEGLHFNLTEIPEAQVHEGFQELLRTLNQPDSQLQLTTGNGLFLNESLKLVDKFLEDVKKLYHSDAFTVNFGDTEEAKKQINDYVEKGTQGKIVDLVKELDRDTVFALVNYIFFKGKWERPFEVKDTKEEDFHVDEVTTVKVPMMRRLGMFNIHYCEKLSSWVLLMKYLGNATAIFFLPDEGKLQHLENELTHDIITKFLENENRRSASLHLPKLSITGTYDLKRVLGQLGITKVFSNGADLSGVTEEAPLKLSKAVHKAVLTIDEKGTEAAGAMFLEAIPMSIPPEVKFNKPFVFLMIEQNTKSPLFVGKVVNPTQK.

The signal sequence occupies residues 1-24; the sequence is MPSSVSWGILLLAGLCCLVPVSLA. Residue S38 is modified to Phosphoserine. N-linked (GlcNAc...) asparagine glycosylation is found at N70, N107, and N271. The interval 373–392 is RCL; the sequence is GAMFLEAIPMSIPPEVKFNK. S383 is modified (phosphoserine).

Belongs to the serpin family. In terms of assembly, interacts with CELA2A. Interacts with ERGIC3 and LMAN1/ERGIC53. Interacts with PRSS1/Trypsin. In terms of tissue distribution, plasma.

The protein localises to the secreted. Its function is as follows. Inhibitor of serine proteases. Its primary target is elastase, but it also has a moderate affinity for plasmin and thrombin. Inhibits trypsin, chymotrypsin and plasminogen activator. This is Alpha-1-antitrypsin (SERPINA1) from Pongo abelii (Sumatran orangutan).